The sequence spans 503 residues: Alpha-1B-glycoprotein (503 aa).

The N-terminal stretch at 1–21 is a signal peptide; sequence MSAWAALLLLWGLSLSPVTEQ. 5 Ig-like V-type domains span residues 27-115, 117-204, 208-305, 307-405, and 406-501; these read PRPS…EVTG, EPLP…TVTI, DPPP…LVLS, GTLP…LRVD, and GPLP…LRVA. The cysteines at positions 49 and 96 are disulfide-linked. Asparagine 137 and asparagine 182 each carry an N-linked (GlcNAc...) asparagine glycan. 4 cysteine pairs are disulfide-bonded: cysteine 142/cysteine 185, cysteine 235/cysteine 282, cysteine 333/cysteine 382, and cysteine 431/cysteine 478. Asparagine 379 is a glycosylation site (N-linked (GlcNAc...) asparagine).

In terms of assembly, interacts with CRISP3. Plasma.

It is found in the secreted. The polypeptide is Alpha-1B-glycoprotein (Bos taurus (Bovine)).